The chain runs to 219 residues: Exosomal polycystin-1-interacting protein (219 aa).

The signal sequence occupies residues 1–19; it reads MAPPSRHCLLLISTLGVFA. Asn-29, Asn-42, Asn-95, Asn-188, and Asn-210 each carry an N-linked (GlcNAc...) asparagine glycan.

This sequence belongs to the EPCIP family. Homooligomer. Interacts with PKD1 (via the PKD repeats in the N-terminal extracellular region); the interaction is not dependent on N-glycosylation of either protein. In terms of processing, N-glycosylated. Detected in the kidney and in the endothelium of large blood vessels (at protein level).

The protein localises to the vesicle. It localises to the secreted. The protein resides in the extracellular exosome. Its function is as follows. Likely to be involved with PKD1 in the detection, sequestration and exocytosis of senescent mitochondria. This Homo sapiens (Human) protein is Exosomal polycystin-1-interacting protein.